A 139-amino-acid polypeptide reads, in one-letter code: ATP synthase epsilon chain (139 aa).

Belongs to the ATPase epsilon chain family. F-type ATPases have 2 components, CF(1) - the catalytic core - and CF(0) - the membrane proton channel. CF(1) has five subunits: alpha(3), beta(3), gamma(1), delta(1), epsilon(1). CF(0) has three main subunits: a, b and c.

Its subcellular location is the cell membrane. Functionally, produces ATP from ADP in the presence of a proton gradient across the membrane. The polypeptide is ATP synthase epsilon chain (Ligilactobacillus salivarius (strain UCC118) (Lactobacillus salivarius)).